Reading from the N-terminus, the 119-residue chain is Large ribosomal subunit protein bL12 (119 aa).

It belongs to the bacterial ribosomal protein bL12 family. As to quaternary structure, homodimer. Part of the ribosomal stalk of the 50S ribosomal subunit. Forms a multimeric L10(L12)X complex, where L10 forms an elongated spine to which 2 to 4 L12 dimers bind in a sequential fashion. Binds GTP-bound translation factors.

Its function is as follows. Forms part of the ribosomal stalk which helps the ribosome interact with GTP-bound translation factors. Is thus essential for accurate translation. In Bacillus cytotoxicus (strain DSM 22905 / CIP 110041 / 391-98 / NVH 391-98), this protein is Large ribosomal subunit protein bL12.